A 611-amino-acid chain; its full sequence is Cilia- and flagella-associated protein 100 (611 aa).

The span at 1 to 17 (MSEIPSTIVSKNMTNDK) shows a compositional bias: polar residues. Residues 1–57 (MSEIPSTIVSKNMTNDKNSLESMNISSSSSTEENPKKQARKNEEHGPDPSANPFHLS) are disordered. Over residues 20-32 (LESMNISSSSSTE) the composition is skewed to low complexity. Residues 33–47 (ENPKKQARKNEEHGP) are compositionally biased toward basic and acidic residues. Coiled-coil stretches lie at residues 101 to 128 (SLRRQLQLEDKQEDLEARAEAEHQRAFR), 164 to 203 (ALDVKRREIQRLETLATKEEARLERAEKSLEKDAALFDEF), and 230 to 257 (LEIRDLTTQIVNIKSEISRFEDTLKHYK). Disordered stretches follow at residues 287-323 (EVSEASKESSVNSTPGDKGPGIKGKASSMWAKEGQGT) and 338-380 (SPSY…GEEP). Residues 338-357 (SPSYLSSPQQGSQPSESSGG) show a composition bias toward low complexity. Coiled-coil stretches lie at residues 393 to 432 (VFRELEEQNLSLIQNSQETEKTLEELSHTLKHTQIRMDRE) and 526 to 578 (QVKI…RGRT).

This sequence belongs to the CFAP100 family.

Its subcellular location is the cytoplasm. The protein localises to the cytoskeleton. It localises to the cilium axoneme. Its function is as follows. May play a role in ciliary/flagellar motility by regulating the assembly and the activity of axonemal inner dynein arm. The chain is Cilia- and flagella-associated protein 100 from Homo sapiens (Human).